Here is a 423-residue protein sequence, read N- to C-terminus: Putative serpin-Z12 (423 aa).

The disordered stretch occupies residues 1 to 25 (MAALAAGEPFSGRATGGDGGVRSDV). Residues 370–394 (GTVAAASTAVVMMQKGSSLPPVDFV) form an RCL region.

This sequence belongs to the serpin family.

In terms of biological role, probable serine protease inhibitor. The protein is Putative serpin-Z12 of Oryza sativa subsp. japonica (Rice).